A 275-amino-acid polypeptide reads, in one-letter code: MPSATGTKRVRGVSIFRPFVFGSEAQPFDPATKPSNVSSDHTHQWRVYVRGVNGEDISYWIKKVQFKLHETYVQNVRTVEHPPYEVTETGWGEFEIQIKIYFVPESMEKPQTLWHSLKLHPYGPDAEGKKERREVVVSQNYEEVVFNEPVEQFYDYLTGGSGTQQMQKGKSGKNAKQAQQQRGGRTAEIPFNETPENPYSRTAENKELDRLAEANKTVEQMIKDEKERLIAREKRLAELRASEGVPAQPLKKSFSGRIPVHSQQRMAGTVGPPDS.

The 152-residue stretch at 9-160 (RVRGVSIFRP…EQFYDYLTGG (152 aa)) folds into the YEATS domain. 2 disordered regions span residues 161-207 (SGTQ…ENKE) and 239-275 (LRASEGVPAQPLKKSFSGRIPVHSQQRMAGTVGPPDS). Residues 163–183 (TQQMQKGKSGKNAKQAQQQRG) are compositionally biased toward polar residues. Residues 202-242 (TAENKELDRLAEANKTVEQMIKDEKERLIAREKRLAELRAS) adopt a coiled-coil conformation.

It belongs to the YAF9 family. Component of the SWR1 chromatin-remodeling complex and of the NuA4 histone acetyltransferase complex.

Its subcellular location is the cytoplasm. The protein resides in the nucleus. Functionally, component of the SWR1 complex which mediates the ATP-dependent exchange of histone H2A for the H2A variant HZT1 leading to transcriptional regulation of selected genes by chromatin remodeling. Component of the NuA4 histone acetyltransferase complex which is involved in transcriptional activation of selected genes principally by acetylation of nucleosomal histones H4 and H2A. The NuA4 complex is also involved in DNA repair. Yaf9 may also be required for viability in conditions in which the structural integrity of the spindle is compromised. The protein is Protein AF-9 homolog (yaf9) of Emericella nidulans (strain FGSC A4 / ATCC 38163 / CBS 112.46 / NRRL 194 / M139) (Aspergillus nidulans).